A 27-amino-acid polypeptide reads, in one-letter code: Natriuretic peptides A (27 aa).

Cys7 and Cys23 are joined by a disulfide.

Belongs to the natriuretic peptide family.

It localises to the secreted. In terms of biological role, hormone playing a key role in cardiovascular homeostasis through regulation of natriuresis, diuresis, and vasodilation. Has a cGMP-stimulating activity. The chain is Natriuretic peptides A (nppa) from Anguilla japonica (Japanese eel).